An 866-amino-acid chain; its full sequence is Oxidation resistance protein 1 (866 aa).

The tract at residues 1-92 is disordered; the sequence is MSVSNLSWLK…KKDGRRMSFQ (92 aa). Basic and acidic residues predominate over residues 63–88; it reads RKSELKRFYTIDTGQKKTLDKKDGRR. At S90 the chain carries Phosphoserine. The LysM domain maps to 98–141; the sequence is IEYTVESRDSLNSIALKFDTTPNELVQLNKLFSRAVVTGQVLYV. Phosphothreonine is present on T118. The segment covering 150-168 has biased composition (low complexity); the sequence is VESSPSLSPVSPLSPTSSE. Positions 150 to 202 are disordered; the sequence is VESSPSLSPVSPLSPTSSEAEFDKTTTPDVAHPKEAPPASTVSGIRPARVVSS. Residues 170–184 are compositionally biased toward basic and acidic residues; it reads EFDKTTTPDVAHPKE. S201, S202, and S204 each carry phosphoserine. The 56-residue stretch at 213–268 folds into the GRAM domain; sequence KFLKINCKYITIGKGTVSGVLLVTPNNIMFDPHKTDPLVQENGCEEYGIMCPMEEV. Positions 293–540 are disordered; sequence LSGRGSCHSK…AHGEGSSLLK (248 aa). Phosphoserine occurs at positions 294, 334, and 336. Phosphothreonine is present on T341. At S346 the chain carries Phosphoserine. Residues 347-363 are compositionally biased toward basic and acidic residues; the sequence is PIREELLSSEPRQEKSS. The span at 364–399 shows a compositional bias: polar residues; the sequence is DASSESVQTVSQMEVQSLTATSEAANVPDRTSSNPG. The segment covering 433 to 447 has biased composition (basic and acidic residues); the sequence is QSTEVKGQDNQDSSH. Polar residues predominate over residues 448 to 465; the sequence is QESSLQQEAGEDSVSSGE. Over residues 483 to 497 the composition is skewed to basic and acidic residues; that stretch reads ELKRDSETEVEELRK. The residue at position 488 (S488) is a Phosphoserine. The segment covering 502 to 519 has biased composition (polar residues); that stretch reads HSMQQAKQQRDTIQQVSQ. Residues 543–570 are mediates oxidative antimutator activity; the sequence is RRHRLHKFLCLRVGKPMRKTFVSQASAT. The tract at residues 682–703 is disordered; sequence KQVAPAKADLEPESFRPNLSDP. One can recognise a TLDc domain in the interval 705–866; sequence ELLLPDQIEK…IQDIEIWAFE (162 aa).

It belongs to the OXR1 family. In terms of tissue distribution, highly expressed in brain and testis.

It is found in the mitochondrion. Its subcellular location is the nucleus. The protein localises to the nucleolus. May be involved in protection from oxidative damage. This is Oxidation resistance protein 1 (Oxr1) from Mus musculus (Mouse).